The primary structure comprises 102 residues: NADH-quinone oxidoreductase subunit K 2 (102 aa).

3 consecutive transmembrane segments (helical) span residues 6–26 (LEAF…GIIA), 30–50 (LVTV…ALVG), and 66–86 (FIIA…IAIF).

It belongs to the complex I subunit 4L family. As to quaternary structure, NDH-1 is composed of 14 different subunits. Subunits NuoA, H, J, K, L, M, N constitute the membrane sector of the complex.

It is found in the cell inner membrane. The enzyme catalyses a quinone + NADH + 5 H(+)(in) = a quinol + NAD(+) + 4 H(+)(out). In terms of biological role, NDH-1 shuttles electrons from NADH, via FMN and iron-sulfur (Fe-S) centers, to quinones in the respiratory chain. The immediate electron acceptor for the enzyme in this species is believed to be ubiquinone. Couples the redox reaction to proton translocation (for every two electrons transferred, four hydrogen ions are translocated across the cytoplasmic membrane), and thus conserves the redox energy in a proton gradient. This chain is NADH-quinone oxidoreductase subunit K 2, found in Aquifex aeolicus (strain VF5).